The sequence spans 179 residues: Large ribosomal subunit protein uL6 (179 aa).

The tract at residues 151–179 (RKPEPYKGKGIKYDNEQIRRKAGKSGGKK) is disordered. The span at 152 to 169 (KPEPYKGKGIKYDNEQIR) shows a compositional bias: basic and acidic residues. Residues 170–179 (RKAGKSGGKK) show a composition bias toward basic residues.

The protein belongs to the universal ribosomal protein uL6 family. In terms of assembly, part of the 50S ribosomal subunit.

This protein binds to the 23S rRNA, and is important in its secondary structure. It is located near the subunit interface in the base of the L7/L12 stalk, and near the tRNA binding site of the peptidyltransferase center. The protein is Large ribosomal subunit protein uL6 of Nitratidesulfovibrio vulgaris (strain ATCC 29579 / DSM 644 / CCUG 34227 / NCIMB 8303 / VKM B-1760 / Hildenborough) (Desulfovibrio vulgaris).